A 72-amino-acid polypeptide reads, in one-letter code: Translation initiation factor IF-1 (72 aa).

Residues 1-72 enclose the S1-like domain; that stretch reads MSKEDVIEVE…TRGRITWRAK (72 aa).

It belongs to the IF-1 family. Component of the 30S ribosomal translation pre-initiation complex which assembles on the 30S ribosome in the order IF-2 and IF-3, IF-1 and N-formylmethionyl-tRNA(fMet); mRNA recruitment can occur at any time during PIC assembly.

It is found in the cytoplasm. Functionally, one of the essential components for the initiation of protein synthesis. Stabilizes the binding of IF-2 and IF-3 on the 30S subunit to which N-formylmethionyl-tRNA(fMet) subsequently binds. Helps modulate mRNA selection, yielding the 30S pre-initiation complex (PIC). Upon addition of the 50S ribosomal subunit IF-1, IF-2 and IF-3 are released leaving the mature 70S translation initiation complex. The sequence is that of Translation initiation factor IF-1 from Acetivibrio thermocellus (strain ATCC 27405 / DSM 1237 / JCM 9322 / NBRC 103400 / NCIMB 10682 / NRRL B-4536 / VPI 7372) (Clostridium thermocellum).